Here is a 397-residue protein sequence, read N- to C-terminus: Glycine betaine/carnitine transport ATP-binding protein GbuA (397 aa).

Positions 28–264 (KSKTDILKET…PANEYVEKFI (237 aa)) constitute an ABC transporter domain. 60-67 (GLSGSGKS) is an ATP binding site. CBS domains are found at residues 279 to 335 (MIRP…NITS) and 340 to 395 (LHRD…EVNV).

This sequence belongs to the ABC transporter superfamily. In terms of assembly, the complex is composed of two ATP-binding proteins (GbuA), two transmembrane proteins (GbuB) and a solute-binding protein (GbuC).

The catalysed reaction is a quaternary ammonium(out) + ATP + H2O = a quaternary ammonium(in) + ADP + phosphate + H(+). The complex is activated by an osmotic gradient or by low temperature. In terms of biological role, part of the ABC transporter complex GbuABC involved in glycine betaine uptake. Responsible for energy coupling to the transport system. Involved, with BetL and OpuC, in osmoprotection and cryoprotection of Listeria. Can also uptake carnitine when carnitine is abundant in the growth medium. The chain is Glycine betaine/carnitine transport ATP-binding protein GbuA (gbuA) from Listeria monocytogenes serotype 1/2a (strain 10403S).